A 331-amino-acid polypeptide reads, in one-letter code: Cytosolic arginine sensor for mTORC1 subunit 1 (331 aa).

Position 14 is a phosphoserine (Ser-14). 2 ACT domains span residues 72 to 137 and 259 to 320; these read AEAT…HTLA and GELW…DILQ. Residues 110-111, Gly-273, 279-280, and 299-303 each bind L-arginine; these read SV, IV, and TFNFD.

It belongs to the GATS family. In terms of assembly, forms homodimers and heterodimers with CASTOR2. Interacts with the GATOR2 complex which is composed of MIOS, SEC13, SEH1L, WDR24 and WDR59; the interaction is negatively regulated by arginine. Interacts with TM4SF5; the interaction is positively regulated by leucine and is negatively regulated by arginine. In terms of processing, phosphorylation at Ser-14 by AKT1, promoting the interaction between CASTOR1 and RNF167. Ubiquitinated by RNF167 via 'Lys-29'-polyubiquitination, leading to its degradation, releasing the GATOR2 complex. Ubiquitination by RNF167 is promoted by phosphorylation at Ser-14 by AKT1.

The protein localises to the cytoplasm. It localises to the cytosol. Its function is as follows. Functions as an intracellular arginine sensor within the amino acid-sensing branch of the TORC1 signaling pathway. As a homodimer or a heterodimer with CASTOR2, binds and inhibits the GATOR subcomplex GATOR2 and thereby mTORC1. Binding of arginine to CASTOR1 allosterically disrupts the interaction of CASTOR1-containing dimers with GATOR2 which can in turn activate mTORC1 and the TORC1 signaling pathway. In Mus musculus (Mouse), this protein is Cytosolic arginine sensor for mTORC1 subunit 1.